The following is a 128-amino-acid chain: Cytochrome c-type biogenesis protein CcmE (128 aa).

The Cytoplasmic segment spans residues 1–8 (MQKRVRNR). A helical; Signal-anchor for type II membrane protein transmembrane segment spans residues 9 to 29 (LITIIICFCSAFLGISIILYN). At 30–128 (LEKNIVFFLP…KHDENYRPPQ (99 aa)) the chain is on the periplasmic side. Positions 120 and 124 each coordinate heme.

This sequence belongs to the CcmE/CycJ family.

It localises to the cell inner membrane. Functionally, heme chaperone required for the biogenesis of c-type cytochromes. Transiently binds heme delivered by CcmC and transfers the heme to apo-cytochromes in a process facilitated by CcmF and CcmH. This is Cytochrome c-type biogenesis protein CcmE from Rickettsia rickettsii (strain Iowa).